A 624-amino-acid chain; its full sequence is Probable potassium transport system protein Kup 1 (624 aa).

A run of 12 helical transmembrane segments spans residues 10-30 (LALGALGVVFGDIGTSPLYAL), 48-68 (LSLIFWSLIIVVSFKYLMIIF), 94-114 (PLFYIVAIFGAGLLLGDGMLT), 133-153 (LYPYVLPIASLILILLFSLQA), 159-179 (IGYLFGPLILVWFITIAILGI), 210-230 (LLLGGIFLVVTGGEALFADIG), 242-262 (FFAALPCLLLNYFGQGANLIV), 270-290 (PFFMIAPSWFYLPLIIIATVA), 331-351 (IYVPQINFILFIGTMAFCLAF), 363-383 (IAVNLEMLLVDAMVAYAAISI), 388-408 (IFNVMFLFGLFLLIDLAFLGA), and 413-433 (FITGGWVPIVLAFFIAFIMYS).

The protein belongs to the HAK/KUP transporter (TC 2.A.72) family.

It is found in the cell inner membrane. The enzyme catalyses K(+)(in) + H(+)(in) = K(+)(out) + H(+)(out). In terms of biological role, transport of potassium into the cell. Likely operates as a K(+):H(+) symporter. This Legionella pneumophila (strain Lens) protein is Probable potassium transport system protein Kup 1.